The chain runs to 555 residues: Alpha-copaene synthase (555 aa).

The Mg(2+) site is built by Asp-312, Asp-316, Asp-452, Ser-456, and Glu-460. A DDXXD motif motif is present at residues 312 to 316 (DDTYD).

Belongs to the terpene synthase family. Requires Mg(2+) as cofactor. Mainly expressed in sunflower trichomes.

The enzyme catalyses (2E,6E)-farnesyl diphosphate = alpha-copaene + diphosphate. The catalysed reaction is (2E,6E)-farnesyl diphosphate = alpha-muurolene + diphosphate. It carries out the reaction (2E,6E)-farnesyl diphosphate = alpha-humulene + diphosphate. Its pathway is secondary metabolite biosynthesis; terpenoid biosynthesis. Its function is as follows. Involved in the biosynthesis of germacrene-derived sesquiterpene lactones. Catalyzes the cyclization of farnesyl diphosphate to alpha-copaene, delta-cadinene, alpha-muurolene, beta-caryophyllene and alpha-humulene. This Helianthus annuus (Common sunflower) protein is Alpha-copaene synthase (CS).